A 345-amino-acid polypeptide reads, in one-letter code: Dihydroorotase (345 aa).

The Zn(2+) site is built by H14 and H16. Substrate is bound by residues H16 to R18 and N42. Residues K100, H137, and H175 each coordinate Zn(2+). N6-carboxylysine is present on K100. H137 provides a ligand contact to substrate. Residue L220 coordinates substrate. D248 contacts Zn(2+). D248 is a catalytic residue. Substrate contacts are provided by H252 and A264.

The protein belongs to the metallo-dependent hydrolases superfamily. DHOase family. Class II DHOase subfamily. In terms of assembly, homodimer. Zn(2+) is required as a cofactor.

The catalysed reaction is (S)-dihydroorotate + H2O = N-carbamoyl-L-aspartate + H(+). It functions in the pathway pyrimidine metabolism; UMP biosynthesis via de novo pathway; (S)-dihydroorotate from bicarbonate: step 3/3. Catalyzes the reversible cyclization of carbamoyl aspartate to dihydroorotate. This Methylobacillus flagellatus (strain ATCC 51484 / DSM 6875 / VKM B-1610 / KT) protein is Dihydroorotase.